Reading from the N-terminus, the 435-residue chain is Protein CHLOROPLAST IMPORT APPARATUS 2 (435 aa).

The transit peptide at 1-59 directs the protein to the chloroplast; the sequence is MSACLSSGGGGAAAYSFELEKVKSPPPSSSTTTTRATSPSSTISESSNSPLAISTRKPR. Disordered regions lie at residues 21 to 66 and 412 to 435; these read KVKS…KRPN and ADQR…SGQR. The span at 29–49 shows a compositional bias: low complexity; that stretch reads SSTTTTRATSPSSTISESSNS. The segment covering 56-65 has biased composition (basic residues); sequence RKPRTQRKRP. The region spanning 383–425 is the CCT domain; it reads REASVLRYKEKRRTRLFSKKIRYQVRKLNADQRPRMKGRFVRR.

In terms of tissue distribution, expressed in leaves and young flower buds.

The protein resides in the plastid. It localises to the chloroplast. Its subcellular location is the nucleus. Responsible for specific up-regulation of the translocon genes TOC33 and TOC75 in leaves. Involved in the general chloroplast protein import pathway regulation, including protein import and protein translation efficiencies. This is Protein CHLOROPLAST IMPORT APPARATUS 2 (CIA2) from Arabidopsis thaliana (Mouse-ear cress).